Consider the following 234-residue polypeptide: Peptidase E (234 aa).

Catalysis depends on charge relay system residues Ser-123, Asp-138, and His-160.

The protein belongs to the peptidase S51 family.

The protein resides in the cytoplasm. It catalyses the reaction Dipeptidase E catalyzes the hydrolysis of dipeptides Asp-|-Xaa. It does not act on peptides with N-terminal Glu, Asn or Gln, nor does it cleave isoaspartyl peptides.. Functionally, hydrolyzes dipeptides containing N-terminal aspartate residues. May play a role in allowing the cell to use peptide aspartate to spare carbon otherwise required for the synthesis of the aspartate family of amino acids. The polypeptide is Peptidase E (Pasteurella multocida (strain Pm70)).